Here is a 296-residue protein sequence, read N- to C-terminus: Phosphoribosylaminoimidazole-succinocarboxamide synthase (296 aa).

This sequence belongs to the SAICAR synthetase family.

The catalysed reaction is 5-amino-1-(5-phospho-D-ribosyl)imidazole-4-carboxylate + L-aspartate + ATP = (2S)-2-[5-amino-1-(5-phospho-beta-D-ribosyl)imidazole-4-carboxamido]succinate + ADP + phosphate + 2 H(+). It participates in purine metabolism; IMP biosynthesis via de novo pathway; 5-amino-1-(5-phospho-D-ribosyl)imidazole-4-carboxamide from 5-amino-1-(5-phospho-D-ribosyl)imidazole-4-carboxylate: step 1/2. The polypeptide is Phosphoribosylaminoimidazole-succinocarboxamide synthase (Lachnospira eligens (strain ATCC 27750 / DSM 3376 / VPI C15-48 / C15-B4) (Eubacterium eligens)).